A 97-amino-acid chain; its full sequence is Acylphosphatase (97 aa).

The region spanning 9-95 is the Acylphosphatase-like domain; the sequence is TRHLRIHGLV…CDAQGFEQRE (87 aa). Catalysis depends on residues Arg-24 and Asn-42.

It belongs to the acylphosphatase family.

The enzyme catalyses an acyl phosphate + H2O = a carboxylate + phosphate + H(+). The protein is Acylphosphatase (acyP) of Acidovorax sp. (strain JS42).